A 35-amino-acid chain; its full sequence is Photosystem II reaction center protein T (35 aa).

A helical transmembrane segment spans residues 3-23 (ALVYTFLLVSTLGIIFFAIFF).

The protein belongs to the PsbT family. PSII is composed of 1 copy each of membrane proteins PsbA, PsbB, PsbC, PsbD, PsbE, PsbF, PsbH, PsbI, PsbJ, PsbK, PsbL, PsbM, PsbT, PsbY, PsbZ, Psb30/Ycf12, at least 3 peripheral proteins of the oxygen-evolving complex and a large number of cofactors. It forms dimeric complexes.

The protein localises to the plastid. Its subcellular location is the chloroplast thylakoid membrane. Found at the monomer-monomer interface of the photosystem II (PS II) dimer, plays a role in assembly and dimerization of PSII. PSII is a light-driven water plastoquinone oxidoreductase, using light energy to abstract electrons from H(2)O, generating a proton gradient subsequently used for ATP formation. The sequence is that of Photosystem II reaction center protein T from Citrus sinensis (Sweet orange).